We begin with the raw amino-acid sequence, 310 residues long: Dermonecrotic toxin LiSicTox-alphaII2 (310 aa).

Positions 1 to 18 (MLLRIALILGCWSILSEG) are cleaved as a signal peptide. Residues 19–26 (AENDIAER) constitute a propeptide that is removed on maturation. The active site involves histidine 38. Mg(2+) is bound by residues glutamate 58 and aspartate 60. Histidine 74 acts as the Nucleophile in catalysis. Disulfide bonds link cysteine 78/cysteine 84 and cysteine 80/cysteine 224. Asparagine 99 carries an N-linked (GlcNAc...) asparagine glycan. Aspartate 118 contributes to the Mg(2+) binding site.

The protein belongs to the arthropod phospholipase D family. Class II subfamily. Mg(2+) serves as cofactor. As to expression, expressed by the venom gland.

The protein resides in the secreted. It carries out the reaction an N-(acyl)-sphingosylphosphocholine = an N-(acyl)-sphingosyl-1,3-cyclic phosphate + choline. The enzyme catalyses an N-(acyl)-sphingosylphosphoethanolamine = an N-(acyl)-sphingosyl-1,3-cyclic phosphate + ethanolamine. It catalyses the reaction a 1-acyl-sn-glycero-3-phosphocholine = a 1-acyl-sn-glycero-2,3-cyclic phosphate + choline. The catalysed reaction is a 1-acyl-sn-glycero-3-phosphoethanolamine = a 1-acyl-sn-glycero-2,3-cyclic phosphate + ethanolamine. In terms of biological role, dermonecrotic toxins cleave the phosphodiester linkage between the phosphate and headgroup of certain phospholipids (sphingolipid and lysolipid substrates), forming an alcohol (often choline) and a cyclic phosphate. This toxin acts on sphingomyelin (SM). It may also act on ceramide phosphoethanolamine (CPE), lysophosphatidylcholine (LPC) and lysophosphatidylethanolamine (LPE), but not on lysophosphatidylserine (LPS), and lysophosphatidylglycerol (LPG). It acts by transphosphatidylation, releasing exclusively cyclic phosphate products as second products. Induces dermonecrosis, hemolysis, increased vascular permeability, edema, inflammatory response, and platelet aggregation. This chain is Dermonecrotic toxin LiSicTox-alphaII2, found in Loxosceles intermedia (Brown spider).